We begin with the raw amino-acid sequence, 748 residues long: Junctophilin-3 (748 aa).

The Cytoplasmic segment spans residues 1 to 727 (MSSGGRFNFD…LKSSTGSAPI (727 aa)). MORN repeat units follow at residues 15–37 (YCGG…KGQG), 39–60 (YTGS…SGNT), 61–82 (YQGT…GKWV), 83–105 (YKGE…GNGA), 107–129 (YEGT…DGGT), and 130–152 (YQGQ…PYGM). The interval 230–259 (SKSSLASQRSKQSSFRSEAGMSTVSSTASD) is disordered. Low complexity predominate over residues 231-244 (KSSLASQRSKQSSF). The segment covering 249-259 (GMSTVSSTASD) has biased composition (polar residues). MORN repeat units follow at residues 288-310 (YVGE…DGLK) and 311-333 (YEGE…DGTK). A disordered region spans residues 416 to 496 (AKEFSPSFQH…TPPPAPAARN (81 aa)). A Phosphoserine modification is found at S440. A compositionally biased stretch (polar residues) spans 448–457 (STGTPLQQES). Phosphothreonine is present on T451. S457 is modified (phosphoserine). At T471 the chain carries Phosphothreonine. Phosphoserine is present on residues S475 and S506. 2 disordered regions span residues 526–597 (CARS…SPGG) and 624–649 (HPQK…EDRG). Residues 639-649 (LGDDHRPEDRG) are compositionally biased toward basic and acidic residues. Phosphoserine occurs at positions 703 and 710. The chain crosses the membrane as a helical; Anchor for type IV membrane protein span at residues 728-748 (LVVMVILLNIGVAILFINFFI).

This sequence belongs to the junctophilin family. In terms of tissue distribution, specifically expressed in brain.

The protein resides in the cell membrane. The protein localises to the endoplasmic reticulum membrane. Functionally, junctophilins contribute to the formation of junctional membrane complexes (JMCs) which link the plasma membrane with the endoplasmic or sarcoplasmic reticulum in excitable cells. Provides a structural foundation for functional cross-talk between the cell surface and intracellular calcium release channels. JPH3 is brain-specific and appears to have an active role in certain neurons involved in motor coordination and memory. The chain is Junctophilin-3 (JPH3) from Homo sapiens (Human).